We begin with the raw amino-acid sequence, 462 residues long: Glycerol-3-phosphate acyltransferase ATS12, chloroplastic (462 aa).

The transit peptide at 1–82 (MFILSSSSST…DKESAQSAAT (82 aa)) directs the protein to the chloroplast. The short motif at 233-238 (HQTEAD) is the HXXXXD motif element.

This sequence belongs to the GPAT/DAPAT family.

The protein resides in the plastid. It localises to the chloroplast stroma. The enzyme catalyses a fatty acyl-[ACP] + sn-glycerol 3-phosphate = a 1-acyl-sn-glycero-3-phosphate + holo-[ACP]. It carries out the reaction sn-glycerol 3-phosphate + an acyl-CoA = a 1-acyl-sn-glycero-3-phosphate + CoA. The protein operates within phospholipid metabolism; CDP-diacylglycerol biosynthesis; CDP-diacylglycerol from sn-glycerol 3-phosphate: step 1/3. Functionally, esterifies the acyl-group from acyl-acyl carrier proteins (acyl-ACPs) to the sn-1 position of glycerol-3-phosphate. The physiological acyl donors in chloroplasts are acyl-ACPs, but acyl-CoAs are used as artificial donor for in vitro reactions. The enzyme from chilling-resistant plants discriminates against non-fluid palmitic acid and selects oleic acid whereas the enzyme from sensitive plants accepts both fatty acids. Squash is chilling-sensitive. Does not seem to discriminate between the acyl-ACP thioesters 18:1-ACP, 18:0-ACP and 16:0-ACP. Exhibits higher selectivity for 16:0-CoA than 18:1-CoA in vitro. In Cucurbita moschata (Winter crookneck squash), this protein is Glycerol-3-phosphate acyltransferase ATS12, chloroplastic.